Consider the following 550-residue polypeptide: Eukaryotic translation initiation factor 3 subunit L (550 aa).

Residues 1 to 20 (MVRDSFDGGHTGDPERDLAY) are disordered. The region spanning 309-503 (EATKIFVNCL…IDDSTTDLDF (195 aa)) is the PCI domain.

Belongs to the eIF-3 subunit L family. As to quaternary structure, component of the eukaryotic translation initiation factor 3 (eIF-3) complex.

The protein resides in the cytoplasm. Its function is as follows. Component of the eukaryotic translation initiation factor 3 (eIF-3) complex, which is involved in protein synthesis of a specialized repertoire of mRNAs and, together with other initiation factors, stimulates binding of mRNA and methionyl-tRNAi to the 40S ribosome. The eIF-3 complex specifically targets and initiates translation of a subset of mRNAs involved in cell proliferation. This is Eukaryotic translation initiation factor 3 subunit L from Brugia malayi (Filarial nematode worm).